Reading from the N-terminus, the 829-residue chain is ATP-dependent RNA helicase drs1 (829 aa).

Disordered regions lie at residues 1-96 (MAPS…MDTE) and 145-295 (RRER…MSSF). A compositionally biased stretch (acidic residues) spans 20-32 (DNEEDIPLEEEQE). Basic residues predominate over residues 48-59 (KQKKKNNKKSKK). Residues 63-78 (TEDDDDEAETKEDDAA) are compositionally biased toward acidic residues. Over residues 150–163 (AAKEGKTTATKEEE) the composition is skewed to basic and acidic residues. 4 stretches are compositionally biased toward acidic residues: residues 164–190 (DKMEVDEEEDDIEEIDVDLDDDEDGVL), 218–228 (DGEDEDSEGED), 235–246 (DEDEGDASDDDS), and 258–271 (QSSDDEEGIDEEEE). Residues 272-291 (AKMKEFFAPEEENQPKKKGE) are compositionally biased toward basic and acidic residues. The Q motif signature appears at 293 to 321 (SSFQEMSLSRPILRGLTSVGFTKPTPIQA). Positions 324 to 498 (IPISLMGKDV…RAGLNKPVRI (175 aa)) constitute a Helicase ATP-binding domain. 337 to 344 (AVTGSGKT) is an ATP binding site. The short motif at 446–449 (DEAD) is the DEAD box element. The region spanning 528–707 (YLLHICKTIY…EKQLQNMEMQ (180 aa)) is the Helicase C-terminal domain. Positions 728–829 (TWFETQEDKK…KGGKGKGRRK (102 aa)) are disordered. The segment covering 749–791 (GVRDKLKSKNEGKLSNKDRKKLDTMQERKQERTYKKGSAERAG) has biased composition (basic and acidic residues). The span at 800 to 815 (KVVKKVGRSAGPKKKG) shows a compositional bias: basic residues.

Belongs to the DEAD box helicase family. DDX27/DRS1 subfamily. In terms of assembly, associates with pre-ribosomal particles.

It is found in the nucleus. The protein localises to the nucleolus. It catalyses the reaction ATP + H2O = ADP + phosphate + H(+). In terms of biological role, ATP-binding RNA helicase involved in ribosome assembly. This chain is ATP-dependent RNA helicase drs1 (drh-11), found in Neurospora crassa (strain ATCC 24698 / 74-OR23-1A / CBS 708.71 / DSM 1257 / FGSC 987).